A 400-amino-acid chain; its full sequence is Nicotinate phosphoribosyltransferase (400 aa).

H220 bears the Phosphohistidine; by autocatalysis mark.

It belongs to the NAPRTase family. In terms of processing, transiently phosphorylated on a His residue during the reaction cycle. Phosphorylation strongly increases the affinity for substrates and increases the rate of nicotinate D-ribonucleotide production. Dephosphorylation regenerates the low-affinity form of the enzyme, leading to product release.

The enzyme catalyses nicotinate + 5-phospho-alpha-D-ribose 1-diphosphate + ATP + H2O = nicotinate beta-D-ribonucleotide + ADP + phosphate + diphosphate. The protein operates within cofactor biosynthesis; NAD(+) biosynthesis; nicotinate D-ribonucleotide from nicotinate: step 1/1. Its function is as follows. Catalyzes the synthesis of beta-nicotinate D-ribonucleotide from nicotinate and 5-phospho-D-ribose 1-phosphate at the expense of ATP. The chain is Nicotinate phosphoribosyltransferase from Shigella boydii serotype 18 (strain CDC 3083-94 / BS512).